A 515-amino-acid polypeptide reads, in one-letter code: ATP synthase subunit alpha (515 aa).

Residue 169-176 (GDRQTGKT) coordinates ATP.

It belongs to the ATPase alpha/beta chains family. F-type ATPases have 2 components, CF(1) - the catalytic core - and CF(0) - the membrane proton channel. CF(1) has five subunits: alpha(3), beta(3), gamma(1), delta(1), epsilon(1). CF(0) has three main subunits: a(1), b(2) and c(9-12). The alpha and beta chains form an alternating ring which encloses part of the gamma chain. CF(1) is attached to CF(0) by a central stalk formed by the gamma and epsilon chains, while a peripheral stalk is formed by the delta and b chains.

The protein resides in the cell inner membrane. The catalysed reaction is ATP + H2O + 4 H(+)(in) = ADP + phosphate + 5 H(+)(out). Produces ATP from ADP in the presence of a proton gradient across the membrane. The alpha chain is a regulatory subunit. The protein is ATP synthase subunit alpha of Neisseria meningitidis serogroup C (strain 053442).